Reading from the N-terminus, the 480-residue chain is Aspartyl/glutamyl-tRNA(Asn/Gln) amidotransferase subunit B (480 aa).

Belongs to the GatB/GatE family. GatB subfamily. As to quaternary structure, heterotrimer of A, B and C subunits.

The catalysed reaction is L-glutamyl-tRNA(Gln) + L-glutamine + ATP + H2O = L-glutaminyl-tRNA(Gln) + L-glutamate + ADP + phosphate + H(+). It catalyses the reaction L-aspartyl-tRNA(Asn) + L-glutamine + ATP + H2O = L-asparaginyl-tRNA(Asn) + L-glutamate + ADP + phosphate + 2 H(+). In terms of biological role, allows the formation of correctly charged Asn-tRNA(Asn) or Gln-tRNA(Gln) through the transamidation of misacylated Asp-tRNA(Asn) or Glu-tRNA(Gln) in organisms which lack either or both of asparaginyl-tRNA or glutaminyl-tRNA synthetases. The reaction takes place in the presence of glutamine and ATP through an activated phospho-Asp-tRNA(Asn) or phospho-Glu-tRNA(Gln). This chain is Aspartyl/glutamyl-tRNA(Asn/Gln) amidotransferase subunit B, found in Streptococcus thermophilus (strain ATCC BAA-250 / LMG 18311).